The primary structure comprises 132 residues: Pro-MCH 1 (132 aa).

The signal sequence occupies residues 1-24; sequence MRDSVLSVIFALALFLECYTPSMA. The cysteines at positions 120 and 129 are disulfide-linked.

This sequence belongs to the MCH family. As to expression, pituitary gland. Produced in neurons of lateral basal hypothalamus which project both to the brain and to the neural lobe of the pituitary gland from where MCH is released.

Functionally, plays a role in skin pigmentation by antagonizing the action of melanotropin alpha. Induces melanin concentration within the melanophores. May participate in the control of the hypothalamo-pituitary adrenal gland axis by inhibiting the release of ACTH. This Oncorhynchus kisutch (Coho salmon) protein is Pro-MCH 1 (mch1).